The chain runs to 364 residues: D-alanine--D-alanine ligase (364 aa).

The ATP-grasp domain maps to 134-344 (KVLLKSFNIP…YESLVDKLIT (211 aa)). 167-222 (NNKLNYPVIVKPSVLGSSIGINVAYNVSQIEKYIEEAFEYDLTVVVEKFIKAREIE) lines the ATP pocket. Positions 297, 311, and 313 each coordinate Mg(2+).

This sequence belongs to the D-alanine--D-alanine ligase family. Mg(2+) is required as a cofactor. The cofactor is Mn(2+).

Its subcellular location is the cytoplasm. It carries out the reaction 2 D-alanine + ATP = D-alanyl-D-alanine + ADP + phosphate + H(+). Its pathway is cell wall biogenesis; peptidoglycan biosynthesis. In terms of biological role, cell wall formation. This is D-alanine--D-alanine ligase from Borrelia recurrentis (strain A1).